The sequence spans 277 residues: Peptide deformylase 1A, chloroplastic (277 aa).

Residues Cys-196 and His-238 each coordinate Zn(2+). Residue Glu-239 is part of the active site. A Zn(2+)-binding site is contributed by His-242.

This sequence belongs to the polypeptide deformylase family. Zn(2+) is required as a cofactor.

The protein localises to the plastid. It is found in the chloroplast stroma. It carries out the reaction N-terminal N-formyl-L-methionyl-[peptide] + H2O = N-terminal L-methionyl-[peptide] + formate. In terms of biological role, removes the formyl group from the N-terminal Met of newly synthesized proteins. This is Peptide deformylase 1A, chloroplastic (PDF1A) from Solanum lycopersicum (Tomato).